The primary structure comprises 242 residues: Adenylate kinase 1 (242 aa).

Residues 38–43 (GSGKGT) and Gly42 contribute to the ATP site. An NMP region spans residues 58 to 87 (STGDLLREAAEKKTELGLKIKNIINEGKLV). Residues Thr59, Arg64, 85–87 (KLV), Gly113, 113–116 (GYPR), and Gln120 each bind AMP. The segment at 154 to 191 (GRLIHKPSGRIYHKIFNPPKVPFRDDVTNEPLIQREDD) is LID. 2 residues coordinate ATP: Arg155 and Tyr165. Arg199 provides a ligand contact to AMP. Ala229 contributes to the ATP binding site.

This sequence belongs to the adenylate kinase family.

Its subcellular location is the cytoplasm. It carries out the reaction AMP + ATP = 2 ADP. With respect to regulation, inhibited by the dinucleoside pentaphosphate compound P1,P5-di(adenosine-5') pentaphosphate (AP5A). In terms of biological role, catalyzes the reversible transfer of the terminal phosphate group between ATP and AMP. Has very low activity with CTP, GTP, ITP and UTP and no activity with GMP, CMP, UMP or IMP in vitro. The polypeptide is Adenylate kinase 1 (Plasmodium falciparum (isolate 3D7)).